We begin with the raw amino-acid sequence, 282 residues long: F-box protein VBF (282 aa).

The 44-residue stretch at 1–44 folds into the F-box domain; that stretch reads MMMLPEACIANILAFTSPADAFSSSEVSSVFRLAGDSDFVWEKF.

Component of SCF(VBF) E3 ubiquitin ligase complex that interacts with VIP1. Interacts directly with SKP1A and VIP1. Forms a complex composed of VIP1, VBF and Agrobacterium virE2.

Its function is as follows. Component of SCF(VBF) E3 ubiquitin ligase complexes, which mediate the ubiquitination and subsequent proteasomal degradation of target proteins such as VIP1 and Agrobacterium virE2, after their implication in T-DNA translocation to the host nucleus (can functionally replace Agrobacterium VirF). Required during Agrobacterium-induced tumor formation. This chain is F-box protein VBF (VBF), found in Arabidopsis thaliana (Mouse-ear cress).